An 872-amino-acid chain; its full sequence is MTSAEIRQKFIDFFKSKGHVHVPSSSLVPHNDPTLLFTNAGMNQFKDTFLGLEKREYTRAVTAQKCVRAGGKHNDLDEVGFTARHHTFFEMLGNFSFGDYFKEDALAYAWEFITSPEWLGLPKDRLWVSIYKDDEQAFDVWHNKVGVPADRIVRLGEKDNFWRMGDTGPCGPCSEIFWDMGPEYACDHPDGCRIDTCGCDRWREFWNNVFMQYNQTPEGLVPLERTGVDTGLGLERMATIMQGVWSNWDIDLWQPIFARIHELSGKKYEGEGPEAVAFRVIADHARCCTFLIADGVRFSNEGRGYVMRRILRRAVRFGRVLGFAEPFIWKVAGAVADVMGDAYPEVRERLPVIQDELRREEERFLRTLEQGMNRLEEILARMRQKGETVISGQDAFVLYDTYGFPLDIVRDVAREQGFTVDEQGYQAAMAEQRARARAARDVSYITEVQSRIAGHLEGVAPTRFVGYTELAGEGRVLAVFDQEGNATGAGEGSSVIIVLDRTPFYAEGGGQVGDTGQIVAPGLRVEVEDCRKLPSGHHLHYGTVQEGFLEVGQQVEARVDARKRKDTQKNHTATHLLHKALREVLGTHVQQAGSLVAPDRLRFDFTHTGPMTPEQIAAVEEMINAEIEAAEPVTWTEMPLDEARALGAMALFGEKYGEIVRVVSVGDGWSRELCGGCHVSNTSEVQYFKILSESGIGGGVRRIEAVTGPGVIRHLEEAQARAVEAQEQLRSRMKEMEKELEQLRAKLAASQTDSLVERAQEVGGVKVVAGTAPVATMEDLRNMTDAIRAKLGSGVVVLGAVTSEGKVNLVAAVTKDLAGRVHAGNLIREVARICGGGGGGRPDMATAGGKNPERLGEALNAVPGLVGSQLGL.

Zn(2+) is bound by residues His571, His575, Cys674, and His678.

It belongs to the class-II aminoacyl-tRNA synthetase family. It depends on Zn(2+) as a cofactor.

The protein localises to the cytoplasm. It carries out the reaction tRNA(Ala) + L-alanine + ATP = L-alanyl-tRNA(Ala) + AMP + diphosphate. Catalyzes the attachment of alanine to tRNA(Ala) in a two-step reaction: alanine is first activated by ATP to form Ala-AMP and then transferred to the acceptor end of tRNA(Ala). Also edits incorrectly charged Ser-tRNA(Ala) and Gly-tRNA(Ala) via its editing domain. The sequence is that of Alanine--tRNA ligase from Symbiobacterium thermophilum (strain DSM 24528 / JCM 14929 / IAM 14863 / T).